Consider the following 212-residue polypeptide: uncharacterized protein (212 aa).

2 consecutive transmembrane segments (helical) span residues 54 to 74 and 79 to 99; these read LCFA…GYAG and WIIC…ALLL.

It is found in the cell membrane. This is an uncharacterized protein from Chlamydia pneumoniae (Chlamydophila pneumoniae).